A 432-amino-acid polypeptide reads, in one-letter code: Amino-acid acetyltransferase (432 aa).

Positions 286–425 (ERVREAAIED…ASLYNYQRNS (140 aa)) constitute an N-acetyltransferase domain.

It belongs to the acetyltransferase family. ArgA subfamily.

It is found in the cytoplasm. It catalyses the reaction L-glutamate + acetyl-CoA = N-acetyl-L-glutamate + CoA + H(+). It functions in the pathway amino-acid biosynthesis; L-arginine biosynthesis; N(2)-acetyl-L-ornithine from L-glutamate: step 1/4. This is Amino-acid acetyltransferase from Pseudomonas fluorescens (strain ATCC BAA-477 / NRRL B-23932 / Pf-5).